A 117-amino-acid chain; its full sequence is Large ribosomal subunit protein uL18 (117 aa).

Belongs to the universal ribosomal protein uL18 family. In terms of assembly, part of the 50S ribosomal subunit; part of the 5S rRNA/L5/L18/L25 subcomplex. Contacts the 5S and 23S rRNAs.

This is one of the proteins that bind and probably mediate the attachment of the 5S RNA into the large ribosomal subunit, where it forms part of the central protuberance. In Neisseria gonorrhoeae (strain ATCC 700825 / FA 1090), this protein is Large ribosomal subunit protein uL18.